We begin with the raw amino-acid sequence, 660 residues long: Peroxisomal acyl-coenzyme A oxidase 1 (660 aa).

Ser26 is subject to Phosphoserine. Lys89 and Lys90 each carry N6-succinyllysine. Thr139 and Gly178 together coordinate FAD. Lys216 is modified (N6-acetyllysine). Lys241 carries the N6-succinyllysine modification. N6-acetyllysine is present on residues Lys255, Lys267, and Lys272. Lys349 carries the post-translational modification N6-succinyllysine. Glu421 serves as the catalytic Proton acceptor. Lys437 and Lys446 each carry N6-acetyllysine; alternate. N6-succinyllysine; alternate is present on residues Lys437 and Lys446. At Lys500 the chain carries N6-acetyllysine. Lys512 is modified (N6-acetyllysine; alternate). Lys512 carries the N6-succinyllysine; alternate modification. Residue Lys542 is modified to N6-succinyllysine. Lys637 is modified (N6-acetyllysine; alternate). Lys637 bears the N6-succinyllysine; alternate mark. At Lys643 the chain carries N6-succinyllysine. Position 649 is a phosphoserine (Ser649). At Lys651 the chain carries N6-acetyllysine. Lys654 bears the N6-succinyllysine mark. The Microbody targeting signal motif lies at Ser658–Leu660.

Belongs to the acyl-CoA oxidase family. In terms of assembly, homodimer. Interacts with LONP2. FAD serves as cofactor.

It localises to the peroxisome. It catalyses the reaction a 2,3-saturated acyl-CoA + O2 = a (2E)-enoyl-CoA + H2O2. The enzyme catalyses hexadecanoyl-CoA + O2 = (2E)-hexadecenoyl-CoA + H2O2. It carries out the reaction dodecanoyl-CoA + O2 = (2E)-dodecenoyl-CoA + H2O2. The catalysed reaction is octanoyl-CoA + O2 = (2E)-octenoyl-CoA + H2O2. It catalyses the reaction decanoyl-CoA + O2 = (2E)-decenoyl-CoA + H2O2. The enzyme catalyses tetradecanoyl-CoA + O2 = (2E)-tetradecenoyl-CoA + H2O2. It carries out the reaction hexadecanedioyl-CoA + O2 = (2E)-hexadecenedioyl-CoA + H2O2. The catalysed reaction is tetracosanoyl-CoA + O2 = (2E)-tetracosenoyl-CoA + H2O2. It catalyses the reaction glutaryl-CoA + O2 = (2E)-glutaconyl-CoA + H2O2. The enzyme catalyses hexanoyl-CoA + O2 = (2E)-hexenoyl-CoA + H2O2. It carries out the reaction octadecanoyl-CoA + O2 = (2E)-octadecenoyl-CoA + H2O2. The catalysed reaction is (5Z,8Z,11Z,14Z,17Z)-eicosapentaenoyl-CoA + O2 = (2E,5Z,8Z,11Z,14Z,17Z)-icosahexaenoyl-CoA + H2O2. It catalyses the reaction (6Z,9Z,12Z,15Z,18Z,21Z)-tetracosahexaenoyl-CoA + O2 = (2E,6Z,9Z,12Z,15Z,18Z,21Z)-tetracosaheptaenoyl-CoA + H2O2. It functions in the pathway lipid metabolism; peroxisomal fatty acid beta-oxidation. In terms of biological role, involved in the initial and rate-limiting step of peroxisomal beta-oxidation of straight-chain saturated and unsaturated very-long-chain fatty acids. Catalyzes the desaturation of fatty acyl-CoAs such as palmitoyl-CoA (hexadecanoyl-CoA) to 2-trans-enoyl-CoAs ((2E)-enoyl-CoAs) such as (2E)-hexadecenoyl-CoA, and donates electrons directly to molecular oxygen (O(2)), thereby producing hydrogen peroxide (H(2)O(2)). Its function is as follows. Shows highest activity against medium-chain fatty acyl-CoAs. Shows optimum activity with a chain length of 10 carbons (decanoyl-CoA) in vitro. Functionally, is active against a much broader range of substrates and shows activity towards long-chain acyl-CoAs. This is Peroxisomal acyl-coenzyme A oxidase 1 from Pongo abelii (Sumatran orangutan).